Reading from the N-terminus, the 736-residue chain is Probable beta-glucosidase L (736 aa).

An N-terminal signal peptide occupies residues 1 to 21 (MNYRVPSLKATALAMAALTQA). A glycan (N-linked (GlcNAc...) asparagine) is linked at N224. D252 is an active-site residue. Residues N295, N363, N429, and N607 are each glycosylated (N-linked (GlcNAc...) asparagine).

This sequence belongs to the glycosyl hydrolase 3 family.

The protein resides in the secreted. The catalysed reaction is Hydrolysis of terminal, non-reducing beta-D-glucosyl residues with release of beta-D-glucose.. Its pathway is glycan metabolism; cellulose degradation. Functionally, beta-glucosidases are one of a number of cellulolytic enzymes involved in the degradation of cellulosic biomass. Catalyzes the last step releasing glucose from the inhibitory cellobiose. This Aspergillus terreus (strain NIH 2624 / FGSC A1156) protein is Probable beta-glucosidase L (bglL).